A 223-amino-acid chain; its full sequence is Deoxyribose-phosphate aldolase (223 aa).

Asp-92 acts as the Proton donor/acceptor in catalysis. Lys-158 acts as the Schiff-base intermediate with acetaldehyde in catalysis. Lys-188 serves as the catalytic Proton donor/acceptor.

Belongs to the DeoC/FbaB aldolase family. DeoC type 1 subfamily.

It is found in the cytoplasm. The enzyme catalyses 2-deoxy-D-ribose 5-phosphate = D-glyceraldehyde 3-phosphate + acetaldehyde. Its pathway is carbohydrate degradation; 2-deoxy-D-ribose 1-phosphate degradation; D-glyceraldehyde 3-phosphate and acetaldehyde from 2-deoxy-alpha-D-ribose 1-phosphate: step 2/2. Its function is as follows. Catalyzes a reversible aldol reaction between acetaldehyde and D-glyceraldehyde 3-phosphate to generate 2-deoxy-D-ribose 5-phosphate. This is Deoxyribose-phosphate aldolase from Mycobacterium avium (strain 104).